The chain runs to 295 residues: MAETPSFQSLILRLQQFWAAQGCVLLQPYDMEVGAGTFHPATTLRALGPEPWKAAYVQPSRRPTDGRYGENPNRLQHYYQFQVILKPSPADPQALYLDSLRALGIDPLKHDIRFVEDDWESPTLGAWGLGWEVWCDGMEVTQFTYFQQVGGFDCDPVPVEMTYGLERLAMYIQGVENVYDLDYNGAGVRYGDIFLQGEKEFSAHNFEYANTEALFRHFKDAEEECMALLAKGVPLPAYDQCIKASHRFNLLDARGVISVTERAAYIGRVRALAKGCCEGWLRARGHLPPLTGTEG.

It belongs to the class-II aminoacyl-tRNA synthetase family. Tetramer of two alpha and two beta subunits.

The protein resides in the cytoplasm. The enzyme catalyses tRNA(Gly) + glycine + ATP = glycyl-tRNA(Gly) + AMP + diphosphate. The polypeptide is Glycine--tRNA ligase alpha subunit (Rhodospirillum rubrum (strain ATCC 11170 / ATH 1.1.1 / DSM 467 / LMG 4362 / NCIMB 8255 / S1)).